The following is a 310-amino-acid chain: Thymidine kinase (310 aa).

17-24 (GPFGIGKT) is a binding site for ATP. Glu45 serves as the catalytic Proton acceptor. Gln86 contacts substrate. Residue Arg176 participates in ATP binding. Arg182 contacts substrate.

The protein belongs to the herpesviridae thymidine kinase family. In terms of assembly, homodimer.

The catalysed reaction is thymidine + ATP = dTMP + ADP + H(+). Its function is as follows. Catalyzes the transfer of the gamma-phospho group of ATP to thymidine to generate dTMP in the salvage pathway of pyrimidine synthesis. The dTMP serves as a substrate for DNA polymerase during viral DNA replication. Allows the virus to be reactivated and to grow in non-proliferative cells lacking a high concentration of phosphorylated nucleic acid precursors. This chain is Thymidine kinase, found in Gallus gallus (Chicken).